We begin with the raw amino-acid sequence, 165 residues long: 6,7-dimethyl-8-ribityllumazine synthase (165 aa).

5-amino-6-(D-ribitylamino)uracil-binding positions include F22, 56-58, and 80-82; these read SME and AVI. 85 to 86 is a (2S)-2-hydroxy-3-oxobutyl phosphate binding site; that stretch reads ET. The active-site Proton donor is H88. F113 is a 5-amino-6-(D-ribitylamino)uracil binding site. R127 contacts (2S)-2-hydroxy-3-oxobutyl phosphate.

The protein belongs to the DMRL synthase family.

It carries out the reaction (2S)-2-hydroxy-3-oxobutyl phosphate + 5-amino-6-(D-ribitylamino)uracil = 6,7-dimethyl-8-(1-D-ribityl)lumazine + phosphate + 2 H2O + H(+). Its pathway is cofactor biosynthesis; riboflavin biosynthesis; riboflavin from 2-hydroxy-3-oxobutyl phosphate and 5-amino-6-(D-ribitylamino)uracil: step 1/2. Catalyzes the formation of 6,7-dimethyl-8-ribityllumazine by condensation of 5-amino-6-(D-ribitylamino)uracil with 3,4-dihydroxy-2-butanone 4-phosphate. This is the penultimate step in the biosynthesis of riboflavin. This chain is 6,7-dimethyl-8-ribityllumazine synthase, found in Thermotoga petrophila (strain ATCC BAA-488 / DSM 13995 / JCM 10881 / RKU-1).